The primary structure comprises 185 residues: Peptidoglycan-recognition protein SC1a (185 aa).

The N-terminal stretch at 1–21 (MVSKVALLLAVLVCSQYMAQG) is a signal peptide. One can recognise an N-acetylmuramoyl-L-alanine amidase domain in the interval 46 to 170 (SYAIIHHTAG…RQVSATECPG (125 aa)). His51 provides a ligand contact to Zn(2+). A disulfide bond links Cys58 and Cys64. Positions 160 and 168 each coordinate Zn(2+).

The protein belongs to the N-acetylmuramoyl-L-alanine amidase 2 family. Zn(2+) serves as cofactor.

It localises to the secreted. It catalyses the reaction Hydrolyzes the link between N-acetylmuramoyl residues and L-amino acid residues in certain cell-wall glycopeptides.. In terms of biological role, N-acetylmuramyl-L-alanine amidase involved in innate immunity by degrading bacterial peptidoglycans (PGN). Plays a scavenger role by digesting biologically active PGN into biologically inactive fragments. Has no direct bacteriolytic activity. The protein is Peptidoglycan-recognition protein SC1a of Drosophila melanogaster (Fruit fly).